The following is a 193-amino-acid chain: nitroreductase FRM2 (193 aa).

It belongs to the nitroreductase family. Requires FMN as cofactor.

The protein localises to the cytoplasm. The protein resides in the nucleus. The enzyme catalyses 4-(hydroxyamino)quinoline N-oxide + 2 NAD(+) + H2O = 4-nitroquinoline N-oxide + 2 NADH + 2 H(+). In terms of biological role, type II nitroreductase, able to reduce 4-nitroquinoline N-oxide (4-NQO) into 4-aminoquinoline-N-oxide (4-AQO) via 4-hydroxyaminoquinoline (4-HAQO), using NADH as reductant. involved in the oxidative stress response. Plays a possible role in the metal stress response. Involved in negative regulation of fatty acid metabolism. This is nitroreductase FRM2 from Saccharomyces cerevisiae (strain ATCC 204508 / S288c) (Baker's yeast).